Reading from the N-terminus, the 467-residue chain is Glutamate--tRNA ligase (467 aa).

Residues 9–19 (PSPTGFLHIGG) carry the 'HIGH' region motif. Residues 250–254 (KLSKR) carry the 'KMSKS' region motif. Lys253 contributes to the ATP binding site.

It belongs to the class-I aminoacyl-tRNA synthetase family. Glutamate--tRNA ligase type 1 subfamily. Monomer.

Its subcellular location is the cytoplasm. The enzyme catalyses tRNA(Glu) + L-glutamate + ATP = L-glutamyl-tRNA(Glu) + AMP + diphosphate. Catalyzes the attachment of glutamate to tRNA(Glu) in a two-step reaction: glutamate is first activated by ATP to form Glu-AMP and then transferred to the acceptor end of tRNA(Glu). This chain is Glutamate--tRNA ligase, found in Mesomycoplasma hyopneumoniae (strain 7448) (Mycoplasma hyopneumoniae).